The sequence spans 425 residues: Synaptotagmin-4 (425 aa).

Over 1-16 the chain is Vesicular; it reads MAPITTSRVEFDEIPT. Residues 17-37 form a helical membrane-spanning segment; the sequence is VVGIFSAFGLVFTVSLFAWIC. Over 38–425 the chain is Cytoplasmic; the sequence is CQRRSAKSNK…IAKWHMLCDG (388 aa). Disordered regions lie at residues 102–121 and 126–147; these read NGNFPKTNPKAGSSSDLENV and FPETEKEAVSPESLKSSTSLTS. The segment covering 105-119 has biased composition (polar residues); it reads FPKTNPKAGSSSDLE. At Ser-135 the chain carries Phosphoserine; by MAPK8. Positions 137–146 are enriched in low complexity; the sequence is ESLKSSTSLT. 2 C2 domains span residues 153-274 and 287-420; these read KLGT…MLMT and GRGE…AKWH. 3 residues coordinate Ca(2+): Asp-246, Ser-249, and Asp-252.

Belongs to the synaptotagmin family. Interacts with KIF1A; the interaction increases in presence of calcium and decreases when SYT4 is phosphorylated at Ser-135. Ca(2+) is required as a cofactor. Phosphorylation at Ser-135 by MAPK8/JNK1 reduces interaction with KIF1A and neuronal dense core vesicles mobility. In terms of tissue distribution, widely expressed. Expressed in the brain. Expressed in pituitary gland, cerebellum, cortex, hypothalamus and hippocampus.

It localises to the cytoplasmic vesicle. It is found in the secretory vesicle. The protein resides in the neuronal dense core vesicle membrane. In terms of biological role, synaptotagmin family member which does not bind Ca(2+). Involved in neuronal dense core vesicles (DCVs) mobility through its interaction with KIF1A. Upon increased neuronal activity, phosphorylation by MAPK8/JNK1 destabilizes the interaction with KIF1A and captures DCVs to synapses. Plays a role in dendrite formation by melanocytes. This chain is Synaptotagmin-4 (Syt4), found in Rattus norvegicus (Rat).